A 156-amino-acid polypeptide reads, in one-letter code: Ribosomal RNA large subunit methyltransferase H (156 aa).

S-adenosyl-L-methionine is bound by residues leucine 73, glycine 104, and leucine 123–leucine 128.

This sequence belongs to the RNA methyltransferase RlmH family. In terms of assembly, homodimer.

Its subcellular location is the cytoplasm. It carries out the reaction pseudouridine(1915) in 23S rRNA + S-adenosyl-L-methionine = N(3)-methylpseudouridine(1915) in 23S rRNA + S-adenosyl-L-homocysteine + H(+). Functionally, specifically methylates the pseudouridine at position 1915 (m3Psi1915) in 23S rRNA. In Shewanella piezotolerans (strain WP3 / JCM 13877), this protein is Ribosomal RNA large subunit methyltransferase H.